The primary structure comprises 103 residues: Histone H4.1 (103 aa).

The segment covering 1–14 (MSGRGKGGKGLGKG) has biased composition (gly residues). The interval 1 to 20 (MSGRGKGGKGLGKGGAKRHR) is disordered. Lys6 is modified (N6-acetyl-N6-methyllysine; alternate). 3 positions are modified to N6-methyllysine; alternate: Lys6, Lys9, and Lys13. Lys13 carries the N6-acetyl-N6-methyllysine; alternate modification. Residues 17–21 (KRHRK) mediate DNA binding. At Lys92 the chain carries N6-glutaryllysine.

The protein belongs to the histone H4 family. The nucleosome is a histone octamer containing two molecules each of H2A, H2B, H3 and H4 assembled in one H3-H4 heterotetramer and two H2A-H2B heterodimers. The octamer wraps approximately 147 bp of DNA. Post-translationally, glutarylation at Lys-92 (H4K91glu) destabilizes nucleosomes by promoting dissociation of the H2A-H2B dimers from nucleosomes.

The protein resides in the nucleus. It localises to the chromosome. Core component of nucleosome. Nucleosomes wrap and compact DNA into chromatin, limiting DNA accessibility to the cellular machineries which require DNA as a template. Histones thereby play a central role in transcription regulation, DNA repair, DNA replication and chromosomal stability. DNA accessibility is regulated via a complex set of post-translational modifications of histones, also called histone code, and nucleosome remodeling. The polypeptide is Histone H4.1 (hhfA) (Emericella nidulans (strain FGSC A4 / ATCC 38163 / CBS 112.46 / NRRL 194 / M139) (Aspergillus nidulans)).